The chain runs to 253 residues: Octanoyltransferase (253 aa).

The 190-residue stretch at 47-236 folds into the BPL/LPL catalytic domain; that stretch reads PETPDQVWLV…ALCEVLAARE (190 aa). Substrate-binding positions include 87–94, 159–161, and 172–174; these read RGGQITYH, ALG, and GVS. The active-site Acyl-thioester intermediate is C190.

This sequence belongs to the LipB family.

The protein localises to the cytoplasm. The enzyme catalyses octanoyl-[ACP] + L-lysyl-[protein] = N(6)-octanoyl-L-lysyl-[protein] + holo-[ACP] + H(+). Its pathway is protein modification; protein lipoylation via endogenous pathway; protein N(6)-(lipoyl)lysine from octanoyl-[acyl-carrier-protein]: step 1/2. In terms of biological role, catalyzes the transfer of endogenously produced octanoic acid from octanoyl-acyl-carrier-protein onto the lipoyl domains of lipoate-dependent enzymes. Lipoyl-ACP can also act as a substrate although octanoyl-ACP is likely to be the physiological substrate. In Cupriavidus pinatubonensis (strain JMP 134 / LMG 1197) (Cupriavidus necator (strain JMP 134)), this protein is Octanoyltransferase.